Reading from the N-terminus, the 113-residue chain is Large ribosomal subunit protein bL19 (113 aa).

This sequence belongs to the bacterial ribosomal protein bL19 family.

Its function is as follows. This protein is located at the 30S-50S ribosomal subunit interface and may play a role in the structure and function of the aminoacyl-tRNA binding site. The chain is Large ribosomal subunit protein bL19 from Corynebacterium kroppenstedtii (strain DSM 44385 / JCM 11950 / CIP 105744 / CCUG 35717).